Consider the following 249-residue polypeptide: RNA-free ribonuclease P (249 aa).

The segment at 226–249 is disordered; that stretch reads NENEPEYENRDKSKEGSSGEIEFI. The segment covering 232 to 242 has biased composition (basic and acidic residues); it reads YENRDKSKEGS.

The protein belongs to the HARP family.

The catalysed reaction is Endonucleolytic cleavage of RNA, removing 5'-extranucleotides from tRNA precursor.. In terms of biological role, RNA-free RNase P that catalyzes the removal of the 5'-leader sequence from pre-tRNA to produce the mature 5'-terminus. The polypeptide is RNA-free ribonuclease P (Methanosarcina barkeri (strain Fusaro / DSM 804)).